We begin with the raw amino-acid sequence, 387 residues long: MSEEKCSLTGGEEKGEELARSLAWQHLVKQAEEDDDDDEEALKKEEEEEEEEEEEDEEEEEEGPDSSSDDLSPEAPCMHPDLLELAVDREKCRSIRRQYRQLIYTVQQNREDIVNTASDSLTEALEEANVLFDGVSRTREAALDAQFLVLASDLGKEKAKQLNSDMSFFNHVAFCELLLVFVGLNWMEEECEELSECDESIALSFWNMLHKEATAWMLQAETFHFIFGSFKAERSARKPRQEHHKRACKMEGNGDMPTKLRKLDVHANQETTEKEVERILGLLQTYFQKYPDTPVSYFEFVIDPNSFSRTVENIFYVSFIIRDGFARIRLDQDRLPILEPTNVNQVDEENDSCSYCRKQGVISLSLQDWKNIVSTFEISEAMIKNSY.

Positions 1–19 (MSEEKCSLTGGEEKGEELA) are enriched in basic and acidic residues. Residues 1-77 (MSEEKCSLTG…SDDLSPEAPC (77 aa)) form a disordered region. Residues 32–72 (EEDDDDDEEALKKEEEEEEEEEEEDEEEEEEGPDSSSDDLS) show a composition bias toward acidic residues.

This sequence belongs to the NSE4 family. As to quaternary structure, component of the SMC5-SMC6 complex which consists at least of SMC5, SMC6, NSMCE2, NSMCE1, NSMCE4A or EID3 and NSMCE3. NSMCE1, NSMCE4A or EID3 and NSMCE3 probably form a subcomplex that bridges the head domains of the SMC5:SMC6 heterodimer. Homodimer, and heterodimer with EID2. Interacts with the C-terminal region of CREBBP.

It is found in the nucleus. Its subcellular location is the cytoplasm. The protein resides in the chromosome. The protein localises to the telomere. Its function is as follows. Tissue-specific component of the SMC5-SMC6 complex, a complex involved in repair of DNA double-strand breaks by homologous recombination. The complex may promote sister chromatid homologous recombination by recruiting the SMC1-SMC3 cohesin complex to double-strand breaks. The complex is required for telomere maintenance via recombination and mediates sumoylation of shelterin complex (telosome) components. Functionally, acts as a repressor of nuclear receptor-dependent transcription possibly by interfering with CREBBP-dependent coactivation. May function as a coinhibitor of other CREBBP/EP300-dependent transcription factors. This is EP300-interacting inhibitor of differentiation 3 from Rattus norvegicus (Rat).